Consider the following 169-residue polypeptide: Regulator of ribonuclease activity A (169 aa).

It belongs to the RraA family. Homotrimer. Binds to both RNA-binding sites in the C-terminal region of Rne and to RhlB.

The protein resides in the cytoplasm. Its function is as follows. Globally modulates RNA abundance by binding to RNase E (Rne) and regulating its endonucleolytic activity. Can modulate Rne action in a substrate-dependent manner by altering the composition of the degradosome. Modulates RNA-binding and helicase activities of the degradosome. This is Regulator of ribonuclease activity A from Photorhabdus laumondii subsp. laumondii (strain DSM 15139 / CIP 105565 / TT01) (Photorhabdus luminescens subsp. laumondii).